The chain runs to 358 residues: Methylthioribose-1-phosphate isomerase (358 aa).

Residue Met1 is modified to N-acetylmethionine. The active-site Proton donor is the Asp248.

Belongs to the eIF-2B alpha/beta/delta subunits family. MtnA subfamily.

Its subcellular location is the cytoplasm. The protein localises to the nucleus. It carries out the reaction 5-(methylsulfanyl)-alpha-D-ribose 1-phosphate = 5-(methylsulfanyl)-D-ribulose 1-phosphate. Its pathway is amino-acid biosynthesis; L-methionine biosynthesis via salvage pathway; L-methionine from S-methyl-5-thio-alpha-D-ribose 1-phosphate: step 1/6. Its function is as follows. Catalyzes the interconversion of methylthioribose-1-phosphate (MTR-1-P) into methylthioribulose-1-phosphate (MTRu-1-P). This is Methylthioribose-1-phosphate isomerase from Bos taurus (Bovine).